The chain runs to 209 residues: Thymidylate kinase (209 aa).

10–17 lines the ATP pocket; it reads GIDGCGKS.

The protein belongs to the thymidylate kinase family.

The catalysed reaction is dTMP + ATP = dTDP + ADP. Functionally, phosphorylation of dTMP to form dTDP in both de novo and salvage pathways of dTTP synthesis. This chain is Thymidylate kinase, found in Synechococcus sp. (strain CC9902).